The sequence spans 435 residues: GTPase Der (435 aa).

EngA-type G domains follow at residues 4–167 (KIVA…SKND) and 175–350 (TKIA…QSLS). GTP-binding positions include 10–17 (GKPNVGKS), 57–61 (DTGGI), 119–122 (NKYD), 181–188 (GKPNVGKS), 228–232 (DTAGI), and 293–296 (NKWD). Residues 351-435 (VKVKTYVLNE…PINLIFRERK (85 aa)) form the KH-like domain.

This sequence belongs to the TRAFAC class TrmE-Era-EngA-EngB-Septin-like GTPase superfamily. EngA (Der) GTPase family. Associates with the 50S ribosomal subunit.

GTPase that plays an essential role in the late steps of ribosome biogenesis. The chain is GTPase Der from Mycoplasma capricolum subsp. capricolum (strain California kid / ATCC 27343 / NCTC 10154).